The chain runs to 238 residues: LexA repressor (238 aa).

The segment at residues 26-46 is a DNA-binding region (H-T-H motif); it reads FDEMKDALDLASKSGIHRLIT. Catalysis depends on for autocatalytic cleavage activity residues Ser158 and Lys196.

The protein belongs to the peptidase S24 family. Homodimer.

The enzyme catalyses Hydrolysis of Ala-|-Gly bond in repressor LexA.. Functionally, represses a number of genes involved in the response to DNA damage (SOS response), including recA and lexA. In the presence of single-stranded DNA, RecA interacts with LexA causing an autocatalytic cleavage which disrupts the DNA-binding part of LexA, leading to derepression of the SOS regulon and eventually DNA repair. This chain is LexA repressor, found in Sinorhizobium medicae (strain WSM419) (Ensifer medicae).